The following is a 336-amino-acid chain: Potassium channel subfamily K member 1 (336 aa).

At 1–20 (MLQSLAGSSCVRLVERHRSA) the chain is on the cytoplasmic side. The helical transmembrane segment at 21–41 (WCFGLLVLGYLLYLVFGAVVF) threads the bilayer. Residues 42 to 103 (SSVELPYEDL…SNASGNWNWD (62 aa)) lie on the Extracellular side of the membrane. A glycan (N-linked (GlcNAc...) asparagine) is linked at asparagine 95. The segment at residues 104-116 (FTSALFFASTVLS) is an intramembrane region (helical). Residues 117–122 (TTGYGH) lie within the membrane without spanning it. The interval 117–122 (TTGYGH) is selectivity filter 1. At 123–132 (TVPLSDGGKA) the chain is on the extracellular side. The chain crosses the membrane as a helical span at residues 133-156 (FCIIYSVIGIPFTLLFLTAVVQRI). Residues 157 to 181 (TVHVTRRPVLYFHIRWGFSKQMVGI) lie on the Cytoplasmic side of the membrane. Residues 182–202 (VHAVVLGFVTVSCFFFIPAAV) form a helical membrane-spanning segment. The Extracellular portion of the chain corresponds to 203 to 211 (FSVLEDDWN). The segment at residues 212-224 (FLESFYFCFISLS) is an intramembrane region (helical). Residues 225 to 230 (TIGLGD) form a selectivity filter 2 region. An intramembrane segment occupies 225-231 (TIGLGDY). Residues 232 to 243 (VPGEGYNQKFRE) lie on the Extracellular side of the membrane. The helical transmembrane segment at 244–267 (LYKIGITCYLLLGLIAMLVVLETF) threads the bilayer. Residues 268–336 (CELHELKKFR…SAYAEDSASH (69 aa)) are Cytoplasmic-facing. Residue lysine 274 forms a Glycyl lysine isopeptide (Lys-Gly) (interchain with G-Cter in SUMO) linkage. Residues 293-299 (IVEHDQL) are important for intracellular retention in recycling endosomes.

This sequence belongs to the two pore domain potassium channel (TC 1.A.1.8) family. As to quaternary structure, homodimer; disulfide-linked. Heterodimer with KCNK2; disulfide-linked. In astrocytes, forms mostly heterodimeric potassium channels with KCNK2, with only a minor proportion of functional channels containing homodimeric KCNK1. Interacts with KCNK3 and KCNK9, forming functional heterodimeric channels. Interacts with GNG4. Identified in a complex with PSD and ARF6; interacts only with PSD that is bound to ARF6. Interacts with UBE2I. In terms of processing, sumoylation is controversial. Sumoylated by UBE2I. Not sumoylated when expressed in xenopus oocytes or mammalian cells. Sumoylation inactivates the channel, but does not interfere with expression at the cell membrane. Sumoylation of a single subunit is sufficient to silence the dimeric channel. Sumoylation of KCNK1 is sufficient to silence heterodimeric channels formed by KCNK1 and KCNK3 or KCNK9. Desumoylated by SENP1; this activates the channel. Desumoylated by SENP1; this strongly increases halothane-mediated activation of heterodimeric channels formed with KCNK9. SENP1 treatment has no effect.

The protein localises to the cell membrane. Its subcellular location is the recycling endosome. The protein resides in the synaptic cell membrane. It localises to the cytoplasmic vesicle. It is found in the perikaryon. The protein localises to the cell projection. Its subcellular location is the dendrite. The protein resides in the apical cell membrane. It catalyses the reaction K(+)(in) = K(+)(out). The enzyme catalyses NH4(+)(in) = NH4(+)(out). The catalysed reaction is Na(+)(in) = Na(+)(out). It carries out the reaction Rb(+)(in) = Rb(+)(out). It catalyses the reaction Cs(+)(in) = Cs(+)(out). The enzyme catalyses Li(+)(in) = Li(+)(out). The catalysed reaction is L-glutamate(out) = L-glutamate(in). It carries out the reaction chloride(in) = chloride(out). Functionally, ion channel that contributes to passive transmembrane potassium transport and to the regulation of the resting membrane potential in brain astrocytes, but also in kidney and in other tissues. Forms dimeric channels through which potassium ions pass in accordance with their electrochemical gradient. The channel is selective for K(+) ions at physiological potassium concentrations and at neutral pH, but becomes permeable to Na(+) at subphysiological K(+) levels and upon acidification of the extracellular medium. The homodimer has very low potassium channel activity, when expressed in heterologous systems, and can function as weakly inward rectifying potassium channel. Channel activity is modulated by activation of serotonin receptors. Heterodimeric channels containing KCNK1 and KCNK2 have much higher activity, and may represent the predominant form in astrocytes. Heterodimeric channels containing KCNK1 and KCNK3 or KCNK9 have much higher activity. Heterodimeric channels formed by KCNK1 and KCNK9 may contribute to halothane-sensitive currents. Mediates outward rectifying potassium currents in dentate gyrus granule cells and contributes to the regulation of their resting membrane potential. Contributes to the regulation of action potential firing in dentate gyrus granule cells and down-regulates their intrinsic excitability. In astrocytes, the heterodimer formed by KCNK1 and KCNK2 is required for rapid glutamate release in response to activation of G-protein coupled receptors, such as F2R and CNR1. Required for normal ion and water transport in the kidney. Contributes to the regulation of the resting membrane potential of pancreatic beta cells. The low channel activity of homodimeric KCNK1 may be due to sumoylation. The low channel activity may be due to rapid internalization from the cell membrane and retention in recycling endosomes. Permeable to monovalent cations with ion selectivity for K(+) &gt; Rb(+) &gt;&gt; NH4(+) &gt;&gt; Cs(+) = Na(+) = Li(+). This Cavia porcellus (Guinea pig) protein is Potassium channel subfamily K member 1.